Here is a 215-residue protein sequence, read N- to C-terminus: 3-dehydroquinate dehydratase (215 aa).

3-dehydroquinate contacts are provided by residues 27-29 (ELR) and arginine 54. The Proton donor/acceptor role is filled by histidine 112. The Schiff-base intermediate with substrate role is filled by lysine 139. The 3-dehydroquinate site is built by arginine 176 and glutamine 198.

It belongs to the type-I 3-dehydroquinase family. Homodimer.

It carries out the reaction 3-dehydroquinate = 3-dehydroshikimate + H2O. It participates in metabolic intermediate biosynthesis; chorismate biosynthesis; chorismate from D-erythrose 4-phosphate and phosphoenolpyruvate: step 3/7. In terms of biological role, involved in the third step of the chorismate pathway, which leads to the biosynthesis of aromatic amino acids. Catalyzes the cis-dehydration of 3-dehydroquinate (DHQ) and introduces the first double bond of the aromatic ring to yield 3-dehydroshikimate. The protein is 3-dehydroquinate dehydratase of Pyrococcus abyssi (strain GE5 / Orsay).